Consider the following 46-residue polypeptide: Putative antitoxin VapB3 (46 aa).

The protein belongs to the UPF0165 family.

In terms of biological role, possibly the antitoxin component of a type II toxin-antitoxin (TA) system. Its cognate toxin is VapC3 (Potential). The protein is Putative antitoxin VapB3 (vapB3) of Pyrococcus furiosus (strain ATCC 43587 / DSM 3638 / JCM 8422 / Vc1).